The following is a 159-amino-acid chain: Transcription elongation factor GreA (159 aa).

A coiled-coil region spans residues 14–76 (IKKLENELEY…QLENMLKNAS (63 aa)).

This sequence belongs to the GreA/GreB family.

Necessary for efficient RNA polymerase transcription elongation past template-encoded arresting sites. The arresting sites in DNA have the property of trapping a certain fraction of elongating RNA polymerases that pass through, resulting in locked ternary complexes. Cleavage of the nascent transcript by cleavage factors such as GreA or GreB allows the resumption of elongation from the new 3'terminus. GreA releases sequences of 2 to 3 nucleotides. The polypeptide is Transcription elongation factor GreA (Clostridium kluyveri (strain NBRC 12016)).